The following is a 900-amino-acid chain: Alanine--tRNA ligase (900 aa).

Zn(2+) is bound by residues histidine 604, histidine 608, cysteine 708, and histidine 712.

The protein belongs to the class-II aminoacyl-tRNA synthetase family. The cofactor is Zn(2+).

The protein localises to the cytoplasm. The catalysed reaction is tRNA(Ala) + L-alanine + ATP = L-alanyl-tRNA(Ala) + AMP + diphosphate. Functionally, catalyzes the attachment of alanine to tRNA(Ala) in a two-step reaction: alanine is first activated by ATP to form Ala-AMP and then transferred to the acceptor end of tRNA(Ala). Also edits incorrectly charged Ser-tRNA(Ala) and Gly-tRNA(Ala) via its editing domain. In Saccharolobus islandicus (strain L.S.2.15 / Lassen #1) (Sulfolobus islandicus), this protein is Alanine--tRNA ligase.